We begin with the raw amino-acid sequence, 657 residues long: ABC1 family protein YPL109C, mitochondrial (657 aa).

The transit peptide at 1–15 (MSFLKFAYRNSWRYY) directs the protein to the mitochondrion.

It belongs to the protein kinase superfamily. ADCK protein kinase family.

Its subcellular location is the mitochondrion. In Saccharomyces cerevisiae (strain ATCC 204508 / S288c) (Baker's yeast), this protein is ABC1 family protein YPL109C, mitochondrial.